Consider the following 833-residue polypeptide: Coiled-coil domain-containing protein 110 (833 aa).

Positions 431–778 (LQNYLKESVQ…REYLNLSDKI (348 aa)) form a coiled coil.

The protein localises to the nucleus. The polypeptide is Coiled-coil domain-containing protein 110 (CCDC110) (Macaca fascicularis (Crab-eating macaque)).